We begin with the raw amino-acid sequence, 397 residues long: RNA polymerase II elongation factor ELL3 (397 aa).

Disordered stretches follow at residues 164–219 (VSDP…KRSV) and 237–284 (VPSP…PEDI). Residues 168-178 (LASNQGQSLPG) show a composition bias toward polar residues. The segment covering 250-262 (QEGEDWEQEDEDM) has biased composition (acidic residues). Over residues 269–281 (SSSVQEDSESPSP) the composition is skewed to low complexity. One can recognise an OCEL domain in the interval 285–395 (PDYLLQYRAI…LILEFEEKNR (111 aa)).

Belongs to the ELL/occludin family. Interacts with AFF4. Component of the super elongation complex (SEC), at least composed of EAF1, EAF2, CDK9, MLLT3/AF9, AFF (AFF1 or AFF4), the P-TEFb complex and ELL (ELL, ELL2 or ELL3). Component of the little elongation complex (LEC), at least composed of ELL (ELL, ELL2 or ELL3), ZC3H8, ICE1 and ICE2. In terms of tissue distribution, testis specific.

Its subcellular location is the nucleus. Enhancer-binding elongation factor that specifically binds enhancers in embryonic stem cells (ES cells), marks them, and is required for their future activation during stem cell specification. Does not only bind to enhancer regions of active genes, but also marks the enhancers that are in a poised or inactive state in ES cells and is required for establishing proper RNA polymerase II occupancy at developmentally regulated genes in a cohesin-dependent manner. Probably required for priming developmentally regulated genes for later recruitment of the super elongation complex (SEC), for transcriptional activation during differentiation. Required for recruitment of P-TEFb within SEC during differentiation. Probably preloaded on germ cell chromatin, suggesting that it may prime gene activation by marking enhancers as early as in the germ cells. Promoting epithelial-mesenchymal transition (EMT). Elongation factor component of the super elongation complex (SEC), a complex required to increase the catalytic rate of RNA polymerase II transcription by suppressing transient pausing by the polymerase at multiple sites along the DNA. Component of the little elongation complex (LEC), a complex required to regulate small nuclear RNA (snRNA) gene transcription by RNA polymerase II and III. This is RNA polymerase II elongation factor ELL3 (ELL3) from Homo sapiens (Human).